A 232-amino-acid chain; its full sequence is YlmG homolog protein 1-1, chloroplastic (232 aa).

The N-terminal 16 residues, 1 to 16 (MAAITALTLRSPVYLP), are a transit peptide targeting the chloroplast. A run of 2 helical transmembrane segments spans residues 147–167 (LTVV…VLMV) and 201–221 (IIPP…AVLG).

Belongs to the YggT family.

The protein localises to the plastid. It is found in the chloroplast thylakoid membrane. In terms of biological role, required for the proper distribution of nucleoids in chloroplasts. The nucleoid partitioning by YLMG1-1 may be related to chloroplast division processes. This Arabidopsis thaliana (Mouse-ear cress) protein is YlmG homolog protein 1-1, chloroplastic.